The following is a 257-amino-acid chain: GTP cyclohydrolase FolE2 (257 aa).

This sequence belongs to the GTP cyclohydrolase IV family.

The enzyme catalyses GTP + H2O = 7,8-dihydroneopterin 3'-triphosphate + formate + H(+). It functions in the pathway cofactor biosynthesis; 7,8-dihydroneopterin triphosphate biosynthesis; 7,8-dihydroneopterin triphosphate from GTP: step 1/1. Functionally, converts GTP to 7,8-dihydroneopterin triphosphate. In Dictyoglomus turgidum (strain DSM 6724 / Z-1310), this protein is GTP cyclohydrolase FolE2.